The following is a 684-amino-acid chain: Homoaconitase, mitochondrial (684 aa).

Residues C337, C397, and C400 each coordinate [4Fe-4S] cluster.

Belongs to the aconitase/IPM isomerase family. Requires [4Fe-4S] cluster as cofactor.

The protein resides in the mitochondrion. The catalysed reaction is (2R,3S)-homoisocitrate = cis-homoaconitate + H2O. Its pathway is amino-acid biosynthesis; L-lysine biosynthesis via AAA pathway; L-alpha-aminoadipate from 2-oxoglutarate: step 3/5. In terms of biological role, catalyzes the reversible hydration of cis-homoaconitate to (2R,3S)-homoisocitrate, a step in the alpha-aminoadipate pathway for lysine biosynthesis. The protein is Homoaconitase, mitochondrial (LYS4) of Candida albicans (strain SC5314 / ATCC MYA-2876) (Yeast).